The chain runs to 174 residues: CASP-like protein 4D2 (174 aa).

The Cytoplasmic portion of the chain corresponds to 1-14 (MAPPPPSPPPVSLK). A helical transmembrane segment spans residues 15–35 (VSLLLLRVLTGVFLVIALIIL). The Extracellular segment spans residues 36-60 (STNSVTIVSQGSALKFHFKDVYAYR). Residues 61 to 81 (YMLSAAVIGLLYAVIQLFFTI) form a helical membrane-spanning segment. At 82 to 150 (SEFATGMKNP…FFSRGYASAS (69 aa)) the chain is on the cytoplasmic side. The chain crosses the membrane as a helical span at residues 151-171 (LLLFSFICLAVLSVFSSLAIA). The Extracellular portion of the chain corresponds to 172 to 174 (KRN).

It belongs to the Casparian strip membrane proteins (CASP) family. Homodimer and heterodimers.

Its subcellular location is the cell membrane. The protein is CASP-like protein 4D2 of Arabidopsis lyrata subsp. lyrata (Lyre-leaved rock-cress).